The chain runs to 1248 residues: Apoptotic protease-activating factor 1 (1248 aa).

The CARD domain maps to 1–90 (MDAKARNCLL…KDLAALLHDG (90 aa)). The NB-ARC domain occupies 104–415 (SGITSYVRTV…METEEVEDIL (312 aa)). Residues 154–161 (GMAGCGKS) and R265 contribute to the ATP site. One copy of the WD 1-1 repeat lies at 613–652 (PHTDAVYHACFSEDGQRIASCGADKTLQVFKAETGEKLLE). One copy of the WD 1-2 repeat lies at 655–694 (AHEDEVLCCAFSTDDRFIATCSVDKKVKIWNSMTGELVHT). Residues 697 to 738 (EHSEQVNCCHFTNSSHHLLLATGSSDCFLKLWDLNQKECRNT) form a WD 1-3 repeat. A WD 1-4 repeat occupies 741 to 780 (GHTNSVNHCRFSPDDKLLASCSADGTLKLWDATSANERKS). The stretch at 796-836 (DMEVIVKCCSWSADGARIMVAAKNKIFLFDIHTSGLLGEIH) is one WD 1-5 repeat. Residues 838 to 877 (GHHSTIQYCDFSPQNHLAVVALSQYCVELWNTDSRSKVAD) form a WD 1-6 repeat. A WD 1-7 repeat occupies 880-910 (GHLSWVHGVMFSPDGSSFLTSSDDQTIRLWE). Positions 910-921 (ETKKVCKNSAVM) are interpropeller linker. A WD 2-1 repeat occupies 922–958 (LKQEVDVVFQENEVMVLAVDHIRRLQLINGRTGQIDY). A WD 2-2 repeat occupies 959 to 998 (LTEAQVSCCCLSPHLQYIAFGDENGAIEILELVNNRIFQS). One copy of the WD 2-3 repeat lies at 1001–1040 (QHKKTVWHIQFTADEKTLISSSDDAEIQVWNWQLDKCIFL). A WD 2-4 repeat occupies 1042-1080 (GHQETVKDFRLLKNSRLLSWSFDGTVKVWNIITGNKEKD). A WD 2-5 repeat occupies 1083 to 1122 (CHQGTVLSCDISHDATKFSSTSADKTAKIWSFDLLLPLHE). The WD 2-6 repeat unit spans residues 1125–1164 (GHNGCVRCSAFSVDSTLLATGDDNGEIRIWNVSNGELLHL). The stretch at 1175–1212 (THGGWVTDLCFSPDGKMLISAGGYIKWWNVVTGESSQT) is one WD 2-7 repeat. One copy of the WD 2-8 repeat lies at 1213 to 1248 (FYTNGTNLKKIHVSPDFKTYVTVDNLGILYILQTLE).

In terms of assembly, monomer. Oligomerizes to a heptameric ring, known as the apoptosome, upon binding of cytochrome c and dATP. Oligomeric Apaf-1 and pro-caspase-9 bind to each other via their respective NH2-terminal CARD domains and consecutively mature caspase-9 is released from the complex. Pro-caspase-3 is recruited into the Apaf-1-pro-caspase-9 complex via interaction with pro-caspase-9. Interacts with APIP. Interacts (via CARD and NACHT domains) with NAIP/BIRC1 (via NACHT domain). Interacts with CIAO2A. As to expression, ubiquitous. Highest levels of expression in adult spleen and peripheral blood leukocytes, and in fetal brain, kidney and lung. Isoform 1 is expressed in heart, kidney and liver.

It is found in the cytoplasm. Oligomeric Apaf-1 mediates the cytochrome c-dependent autocatalytic activation of pro-caspase-9 (Apaf-3), leading to the activation of caspase-3 and apoptosis. This activation requires ATP. Isoform 6 is less effective in inducing apoptosis. The sequence is that of Apoptotic protease-activating factor 1 from Homo sapiens (Human).